The chain runs to 440 residues: MATHRTLLMCLGLPLFFPGALAQNHAPPGCSPDLDPLYYNLCDRSGAWGIVSEAVAGAGIITTFVLTIILVASLPFVQDTKKRSLLGTQVFFLLGTLGLFCLVFACVVKPDFSTCASRRFLFGVLFAICFSCLVAHVLSLNFLTRKNHGPRGWVIFTVALLLTLVEVIINTEWLIITLVRGGGQVSPLGNVSADSTMTSPCAIANMDFVMALIYVMLLLLTAFLGAWPTLCGRFKRWRKHGVFVLLTTVISIAIWVVWIVMYTYGNEQHHSPTWDDPTLAIALAANAWTFVLFYVIPEVSQVTKPSPEQSYQGDMYPTRGVGYETILKEQTGQSMFVENKAFSMDEPASAKRPVSPYSGYNGQLLTSVYQPTEMALMHKGPSEGAYDVILPRATANSQVMGSANSTLRAEDMYMVQSHQVATPPKDGKISQVFRNPYVWD.

The signal sequence occupies residues 1–22; that stretch reads MATHRTLLMCLGLPLFFPGALA. Over 23–49 the chain is Extracellular; the sequence is QNHAPPGCSPDLDPLYYNLCDRSGAWG. A helical transmembrane segment spans residues 50 to 70; the sequence is IVSEAVAGAGIITTFVLTIIL. Residues 71-84 are Cytoplasmic-facing; the sequence is VASLPFVQDTKKRS. Residues 85–105 form a helical membrane-spanning segment; that stretch reads LLGTQVFFLLGTLGLFCLVFA. Topologically, residues 106-119 are extracellular; that stretch reads CVVKPDFSTCASRR. A helical membrane pass occupies residues 120-140; the sequence is FLFGVLFAICFSCLVAHVLSL. Over 141–155 the chain is Cytoplasmic; sequence NFLTRKNHGPRGWVI. The chain crosses the membrane as a helical span at residues 156 to 176; sequence FTVALLLTLVEVIINTEWLII. The Extracellular portion of the chain corresponds to 177–207; it reads TLVRGGGQVSPLGNVSADSTMTSPCAIANMD. Asn190 carries N-linked (GlcNAc...) asparagine glycosylation. A helical transmembrane segment spans residues 208–228; it reads FVMALIYVMLLLLTAFLGAWP. Over 229-240 the chain is Cytoplasmic; the sequence is TLCGRFKRWRKH. Residues 241–261 traverse the membrane as a helical segment; sequence GVFVLLTTVISIAIWVVWIVM. Residues 262-278 lie on the Extracellular side of the membrane; that stretch reads YTYGNEQHHSPTWDDPT. The chain crosses the membrane as a helical span at residues 279–299; sequence LAIALAANAWTFVLFYVIPEV. The Cytoplasmic portion of the chain corresponds to 300-440; it reads SQVTKPSPEQ…QVFRNPYVWD (141 aa). Phosphoserine occurs at positions 343, 382, 402, and 405. Tyr413 is modified (phosphotyrosine). Thr422 is modified (phosphothreonine).

The protein belongs to the G-protein coupled receptor 3 family.

The protein resides in the cell membrane. In terms of biological role, this retinoic acid-inducible G-protein coupled receptor provide evidence for a possible interaction between retinoid and G-protein signaling pathways. The sequence is that of G-protein coupled receptor family C group 5 member C (Gprc5c) from Mus musculus (Mouse).